The chain runs to 210 residues: Large ribosomal subunit protein bL25 (210 aa).

Residues 175–210 (IATILPPQQEEEIDSGEQQEAGQPDAAEGRETTPEE) are disordered. The segment covering 201–210 (AEGRETTPEE) has biased composition (basic and acidic residues).

The protein belongs to the bacterial ribosomal protein bL25 family. CTC subfamily. As to quaternary structure, part of the 50S ribosomal subunit; part of the 5S rRNA/L5/L18/L25 subcomplex. Contacts the 5S rRNA. Binds to the 5S rRNA independently of L5 and L18.

This is one of the proteins that binds to the 5S RNA in the ribosome where it forms part of the central protuberance. This chain is Large ribosomal subunit protein bL25, found in Geobacillus kaustophilus (strain HTA426).